The primary structure comprises 229 residues: uncharacterized protein (229 aa).

Positions 2–229 (LTLNNISKSY…LDERGDISHA (228 aa)) constitute an ABC transporter domain. Residue 38 to 45 (GPSGSGKS) coordinates ATP.

This sequence belongs to the ABC transporter superfamily.

This is an uncharacterized protein from Bacillus subtilis (strain 168).